Reading from the N-terminus, the 80-residue chain is Acyl carrier protein (80 aa).

Residues 4–79 (DEIFSKVRSI…DVVNFIKKRK (76 aa)) enclose the Carrier domain. An O-(pantetheine 4'-phosphoryl)serine modification is found at Ser39.

This sequence belongs to the acyl carrier protein (ACP) family. In terms of processing, 4'-phosphopantetheine is transferred from CoA to a specific serine of apo-ACP by AcpS. This modification is essential for activity because fatty acids are bound in thioester linkage to the sulfhydryl of the prosthetic group.

It localises to the cytoplasm. It functions in the pathway lipid metabolism; fatty acid biosynthesis. Carrier of the growing fatty acid chain in fatty acid biosynthesis. This is Acyl carrier protein from Borreliella burgdorferi (strain ATCC 35210 / DSM 4680 / CIP 102532 / B31) (Borrelia burgdorferi).